We begin with the raw amino-acid sequence, 387 residues long: Protein RecA (387 aa).

80-87 lines the ATP pocket; the sequence is GPESSGKT. Positions 348–387 are disordered; sequence LDDSEVAETEEETTASKTKAKAKKEEKXVETEEIELELQD. Acidic residues-rich tracts occupy residues 349–360 and 378–387; these read DDSEVAETEEET and TEEIELELQD.

It belongs to the RecA family.

It localises to the cytoplasm. Functionally, can catalyze the hydrolysis of ATP in the presence of single-stranded DNA, the ATP-dependent uptake of single-stranded DNA by duplex DNA, and the ATP-dependent hybridization of homologous single-stranded DNAs. It interacts with LexA causing its activation and leading to its autocatalytic cleavage. This is Protein RecA from Lactococcus lactis subsp. cremoris (Streptococcus cremoris).